We begin with the raw amino-acid sequence, 215 residues long: UPF0319 protein VVA1446 (215 aa).

The first 21 residues, 1-21 (MNIIKPLTCILAMSISGLATA), serve as a signal peptide directing secretion.

This sequence belongs to the UPF0319 family.

The polypeptide is UPF0319 protein VVA1446 (Vibrio vulnificus (strain YJ016)).